The following is a 341-amino-acid chain: UPF0283 membrane protein VV2076 (341 aa).

4 helical membrane-spanning segments follow: residues 64–84 (LAGGLFAAFAGLVGWQAVDSV), 93–113 (WLTLGWSGFISVLAGLGLGAM), 207–227 (ESAALVAISPLAIADMLLVAW), and 255–275 (LVLANMAVAGASELVIDAGMD).

It belongs to the UPF0283 family.

The protein localises to the cell inner membrane. In Vibrio vulnificus (strain YJ016), this protein is UPF0283 membrane protein VV2076.